A 196-amino-acid chain; its full sequence is Large ribosomal subunit protein eL15 (196 aa).

2 stretches are compositionally biased toward basic residues: residues 160–172 (ATRGKTSAGRKGR) and 186–196 (PSIRAHKSRGK). Residues 160 to 196 (ATRGKTSAGRKGRGMSTRGKGTEKTRPSIRAHKSRGK) are disordered.

This sequence belongs to the eukaryotic ribosomal protein eL15 family.

This is Large ribosomal subunit protein eL15 (rpl15e) from Methanosarcina mazei (strain ATCC BAA-159 / DSM 3647 / Goe1 / Go1 / JCM 11833 / OCM 88) (Methanosarcina frisia).